The primary structure comprises 116 residues: Flagellar transcriptional regulator FlhD (116 aa).

The protein belongs to the FlhD family. Homodimer; disulfide-linked. Forms a heterohexamer composed of two FlhC and four FlhD subunits. Each FlhC binds a FlhD dimer, forming a heterotrimer, and a hexamer assembles by dimerization of two heterotrimers.

It is found in the cytoplasm. In terms of biological role, functions in complex with FlhC as a master transcriptional regulator that regulates transcription of several flagellar and non-flagellar operons by binding to their promoter region. Activates expression of class 2 flagellar genes, including fliA, which is a flagellum-specific sigma factor that turns on the class 3 genes. Also regulates genes whose products function in a variety of physiological pathways. The sequence is that of Flagellar transcriptional regulator FlhD from Serratia proteamaculans (strain 568).